A 173-amino-acid chain; its full sequence is RNA pyrophosphohydrolase (173 aa).

The Nudix hydrolase domain maps to 11–164 (PYRKCVGIVV…KKHVYMKVVS (154 aa)). Residues 52-73 (GGIDEDEKPLDAAYRELYEETG) carry the Nudix box motif.

The protein belongs to the Nudix hydrolase family. RppH subfamily. It depends on a divalent metal cation as a cofactor.

In terms of biological role, accelerates the degradation of transcripts by removing pyrophosphate from the 5'-end of triphosphorylated RNA, leading to a more labile monophosphorylated state that can stimulate subsequent ribonuclease cleavage. The protein is RNA pyrophosphohydrolase of Bartonella tribocorum (strain CIP 105476 / IBS 506).